A 255-amino-acid chain; its full sequence is Type III pantothenate kinase (255 aa).

6–13 (DIGNTNTV) is a binding site for ATP. Substrate contacts are provided by residues Tyr100 and 107–110 (GADR). Catalysis depends on Asp109, which acts as the Proton acceptor. Asp129 contacts K(+). ATP is bound at residue Thr132. Substrate is bound at residue Thr185.

Belongs to the type III pantothenate kinase family. Homodimer. NH4(+) is required as a cofactor. It depends on K(+) as a cofactor.

It localises to the cytoplasm. The enzyme catalyses (R)-pantothenate + ATP = (R)-4'-phosphopantothenate + ADP + H(+). It participates in cofactor biosynthesis; coenzyme A biosynthesis; CoA from (R)-pantothenate: step 1/5. Catalyzes the phosphorylation of pantothenate (Pan), the first step in CoA biosynthesis. In Desulfosudis oleivorans (strain DSM 6200 / JCM 39069 / Hxd3) (Desulfococcus oleovorans), this protein is Type III pantothenate kinase.